The chain runs to 384 residues: 3,7-dimethylxanthine N-methyltransferase 2 (384 aa).

Positions 18, 61, 66, 100, 101, 139, 140, and 156 each coordinate S-adenosyl-L-homocysteine. Tyr-157 serves as a coordination point for theobromine. Cys-158 is an S-adenosyl-L-homocysteine binding site. Theobromine contacts are provided by His-160 and Trp-161. Asn-178 contacts Mg(2+). Position 237 (Ser-237) interacts with theobromine. The Mg(2+) site is built by Asp-260, Phe-262, and Asn-263. Tyr-368 contributes to the theobromine binding site.

Belongs to the methyltransferase superfamily. Type-7 methyltransferase family. Mg(2+) is required as a cofactor. In terms of tissue distribution, highly expressed in developing endosperm. Detected in young leaves and flower buds. Present in immature fruits (grains), but barely in mature fruits.

The enzyme catalyses 7-methylxanthine + S-adenosyl-L-methionine = theobromine + S-adenosyl-L-homocysteine + H(+). It carries out the reaction theobromine + S-adenosyl-L-methionine = caffeine + S-adenosyl-L-homocysteine + H(+). The catalysed reaction is 1,7-dimethylxanthine + S-adenosyl-L-methionine = caffeine + S-adenosyl-L-homocysteine + H(+). It functions in the pathway alkaloid biosynthesis. Its function is as follows. Involved in the biosynthesis of caffeine. Catalyzes the conversion of 7-methylxanthine (7mX) to theobromine and of theobromine to caffeine. Has 1-N-methylation activity. The protein is 3,7-dimethylxanthine N-methyltransferase 2 of Coffea arabica (Arabian coffee).